Consider the following 149-residue polypeptide: MRAVVQRVDKAIVKVNDRIVSDISKGMLVFLGIEKGDDFSDADFLLEKVINLRIFEDEEGKMNRSLSDISGEMLVVSQFTLLGDCRKGRRPSFTSAEDPERSNILYSHFINQASERIPVVKSGIFQAMMKVSLVNDGPVTMLLDSKRLF.

Positions 137–138 (GP) match the Gly-cisPro motif, important for rejection of L-amino acids motif.

It belongs to the DTD family. Homodimer.

It localises to the cytoplasm. The catalysed reaction is glycyl-tRNA(Ala) + H2O = tRNA(Ala) + glycine + H(+). It catalyses the reaction a D-aminoacyl-tRNA + H2O = a tRNA + a D-alpha-amino acid + H(+). Its function is as follows. An aminoacyl-tRNA editing enzyme that deacylates mischarged D-aminoacyl-tRNAs. Also deacylates mischarged glycyl-tRNA(Ala), protecting cells against glycine mischarging by AlaRS. Acts via tRNA-based rather than protein-based catalysis; rejects L-amino acids rather than detecting D-amino acids in the active site. By recycling D-aminoacyl-tRNA to D-amino acids and free tRNA molecules, this enzyme counteracts the toxicity associated with the formation of D-aminoacyl-tRNA entities in vivo and helps enforce protein L-homochirality. This is D-aminoacyl-tRNA deacylase from Syntrophus aciditrophicus (strain SB).